The following is a 412-amino-acid chain: Serine--tRNA ligase (412 aa).

228–230 (TAE) is a binding site for L-serine. Residue 259-261 (RKE) participates in ATP binding. Glu282 provides a ligand contact to L-serine. 346–349 (EISS) serves as a coordination point for ATP. Ser380 contributes to the L-serine binding site.

Belongs to the class-II aminoacyl-tRNA synthetase family. Type-1 seryl-tRNA synthetase subfamily. Homodimer. The tRNA molecule binds across the dimer.

It is found in the cytoplasm. The catalysed reaction is tRNA(Ser) + L-serine + ATP = L-seryl-tRNA(Ser) + AMP + diphosphate + H(+). It catalyses the reaction tRNA(Sec) + L-serine + ATP = L-seryl-tRNA(Sec) + AMP + diphosphate + H(+). The protein operates within aminoacyl-tRNA biosynthesis; selenocysteinyl-tRNA(Sec) biosynthesis; L-seryl-tRNA(Sec) from L-serine and tRNA(Sec): step 1/1. Functionally, catalyzes the attachment of serine to tRNA(Ser). Is also able to aminoacylate tRNA(Sec) with serine, to form the misacylated tRNA L-seryl-tRNA(Sec), which will be further converted into selenocysteinyl-tRNA(Sec). This Aliarcobacter butzleri (strain RM4018) (Arcobacter butzleri) protein is Serine--tRNA ligase.